Here is a 257-residue protein sequence, read N- to C-terminus: Imidazole glycerol phosphate synthase subunit HisF (257 aa).

Active-site residues include Asp-11 and Asp-130.

The protein belongs to the HisA/HisF family. In terms of assembly, heterodimer of HisH and HisF.

It localises to the cytoplasm. It catalyses the reaction 5-[(5-phospho-1-deoxy-D-ribulos-1-ylimino)methylamino]-1-(5-phospho-beta-D-ribosyl)imidazole-4-carboxamide + L-glutamine = D-erythro-1-(imidazol-4-yl)glycerol 3-phosphate + 5-amino-1-(5-phospho-beta-D-ribosyl)imidazole-4-carboxamide + L-glutamate + H(+). The protein operates within amino-acid biosynthesis; L-histidine biosynthesis; L-histidine from 5-phospho-alpha-D-ribose 1-diphosphate: step 5/9. Functionally, IGPS catalyzes the conversion of PRFAR and glutamine to IGP, AICAR and glutamate. The HisF subunit catalyzes the cyclization activity that produces IGP and AICAR from PRFAR using the ammonia provided by the HisH subunit. The polypeptide is Imidazole glycerol phosphate synthase subunit HisF (Tolumonas auensis (strain DSM 9187 / NBRC 110442 / TA 4)).